The following is a 328-amino-acid chain: Ribosomal RNA small subunit methyltransferase H (328 aa).

S-adenosyl-L-methionine is bound by residues 35 to 37, Asp60, Phe87, Asp113, and Gln120; that span reads GSH.

It belongs to the methyltransferase superfamily. RsmH family.

The protein resides in the cytoplasm. It carries out the reaction cytidine(1402) in 16S rRNA + S-adenosyl-L-methionine = N(4)-methylcytidine(1402) in 16S rRNA + S-adenosyl-L-homocysteine + H(+). Its function is as follows. Specifically methylates the N4 position of cytidine in position 1402 (C1402) of 16S rRNA. This chain is Ribosomal RNA small subunit methyltransferase H, found in Chlorobium chlorochromatii (strain CaD3).